The following is a 76-amino-acid chain: Alpha/kappa-conotoxin-like pl14.3 (76 aa).

A signal peptide spans 1 to 27 (MPSVRSVACCCLLWMMLSVQLVTPGSP). Positions 28–39 (ATAQLSGQRTAR) are excised as a propeptide. Intrachain disulfides connect cysteine 46–cysteine 61 and cysteine 50–cysteine 63. An Aspartic acid 1-amide modification is found at aspartate 64. Residues 65-76 (GKRDVVSSSMAV) constitute a propeptide that is removed on maturation.

This sequence belongs to the conotoxin J superfamily. In terms of tissue distribution, expressed by the venom duct.

The protein localises to the secreted. Its function is as follows. Highly inhibits both nicotinic acetylcholine receptors (neuronal (alpha-3/beta-4) and muscular (alpha-1/beta-1/epsilon/delta) subtypes) and the voltage-gated potassium channel Kv1.6/KCNA6 subtype. The sequence is that of Alpha/kappa-conotoxin-like pl14.3 from Conus planorbis (Planorbis cone).